A 1159-amino-acid chain; its full sequence is ATP-dependent helicase/deoxyribonuclease subunit B (1159 aa).

8–15 (GRAGSGKT) serves as a coordination point for ATP. Residues C784, C1102, C1105, and C1111 each coordinate [4Fe-4S] cluster. The segment at 1140–1159 (VKEDGSQVDGRTEGSDNNEG) is disordered.

The protein belongs to the helicase family. AddB/RexB type 1 subfamily. Heterodimer of AddA and AddB. Mg(2+) serves as cofactor. [4Fe-4S] cluster is required as a cofactor.

In terms of biological role, the heterodimer acts as both an ATP-dependent DNA helicase and an ATP-dependent, dual-direction single-stranded exonuclease. Recognizes the chi site generating a DNA molecule suitable for the initiation of homologous recombination. The AddB subunit has 5' -&gt; 3' nuclease activity but not helicase activity. The sequence is that of ATP-dependent helicase/deoxyribonuclease subunit B from Caldanaerobacter subterraneus subsp. tengcongensis (strain DSM 15242 / JCM 11007 / NBRC 100824 / MB4) (Thermoanaerobacter tengcongensis).